A 314-amino-acid polypeptide reads, in one-letter code: Peroxidase 2 (314 aa).

The first 23 residues, 1-23 (MASASSVSLMLLVAAAMASAASA), serve as a signal peptide directing secretion. A Pyrrolidone carboxylic acid modification is found at glutamine 24. Cystine bridges form between cysteine 34/cysteine 109, cysteine 67/cysteine 72, cysteine 115/cysteine 310, and cysteine 194/cysteine 219. Histidine 65 serves as the catalytic Proton acceptor. 5 residues coordinate Ca(2+): aspartate 66, valine 69, glycine 71, aspartate 73, and serine 75. Asparagine 148 is a glycosylation site (N-linked (GlcNAc...) asparagine). Proline 157 provides a ligand contact to substrate. Asparagine 169 is a glycosylation site (N-linked (GlcNAc...) asparagine). Histidine 187 lines the heme b pocket. Threonine 188 lines the Ca(2+) pocket. A glycan (N-linked (GlcNAc...) asparagine) is linked at asparagine 203. Ca(2+) contacts are provided by aspartate 234, threonine 237, and aspartate 242. 2 N-linked (GlcNAc...) asparagine glycosylation sites follow: asparagine 274 and asparagine 309.

This sequence belongs to the peroxidase family. Classical plant (class III) peroxidase subfamily. Ca(2+) serves as cofactor. Heme b is required as a cofactor.

It is found in the secreted. The catalysed reaction is 2 a phenolic donor + H2O2 = 2 a phenolic radical donor + 2 H2O. Removal of H(2)O(2), oxidation of toxic reductants, biosynthesis and degradation of lignin, suberization, auxin catabolism, response to environmental stresses such as wounding, pathogen attack and oxidative stress. These functions might be dependent on each isozyme/isoform in each plant tissue. This Oryza sativa subsp. indica (Rice) protein is Peroxidase 2 (PRX112).